The primary structure comprises 1146 residues: Integrin alpha-PS1 (1146 aa).

Residues 1-30 (MLELPFTTIRPNCRLRQNLGILIILQCVLT) form the signal peptide. The Extracellular segment spans residues 31–1085 (CYNFNLEQRL…NQQRDTSIPW (1055 aa)). FG-GAP repeat units lie at residues 38-105 (QRLP…FDDC), 121-186 (LSPP…FEEV), 193-245 (RPVQ…YLQR), 254-303 (HSDL…KSTD), 304-366 (NPIP…TLPM), 367-422 (KYTL…GLNS), and 432-494 (ELGG…RKEL). N-linked (GlcNAc...) asparagine glycosylation is found at Asn-68, Asn-86, and Asn-147. N-linked (GlcNAc...) asparagine glycosylation is found at Asn-470, Asn-511, Asn-657, Asn-680, Asn-711, Asn-718, Asn-761, and Asn-928. Positions 938–958 (YYSSSHRDDHSDDTQSNRNRV) are disordered. Positions 942–952 (SHRDDHSDDTQ) are enriched in basic and acidic residues. Asn-1027 is a glycosylation site (N-linked (GlcNAc...) asparagine). A helical membrane pass occupies residues 1086–1106 (LIIILGIVGGLLLLALVTYVL). The Cytoplasmic portion of the chain corresponds to 1107-1146 (WKVGFFKRIRPTDPTLSGNLEKMNEEKPFLAPSKNTHHVF).

This sequence belongs to the integrin alpha chain family. In terms of assembly, heterodimer of an alpha and a beta subunit. The alpha subunit is composed of a heavy and a light chain linked by a disulfide bond. Alpha-PS1 associates with beta-PS. In terms of tissue distribution, expressed in follicle cells (at protein level). At syncytial blastoderm stage, expressed in the ectoderm but not in the mesodermal precursors. At embryonic stage 7, expressed in dorsal and ventrolateral ectoderm and in some yolk nuclei. At late stage 10, expression is homogeneous in the ectoderm and is particularly abundant in the anterior and posterior midgut primordia. At stage 11, strongly expressed in a metameric pattern in the ectoderm, in the proctodeum and in the posterior midgut primordium. At stage 12, accumulates at the segment boundaries that start to become morphologically visible, similar expression pattern is observed in the central nervous system. In third larval instar wing imaginal disk, strongly expressed in the dorsal compartment, in the adepithelial cells and in patches on the peripodial membrane covering the imaginal disk to the outside.

The protein localises to the apical cell membrane. Its subcellular location is the lateral cell membrane. The protein resides in the basal cell membrane. Its function is as follows. Integrin alpha-PS1/beta-PS is a receptor for laminin. This Drosophila melanogaster (Fruit fly) protein is Integrin alpha-PS1 (mew).